Reading from the N-terminus, the 808-residue chain is Probable E3 ubiquitin-protein ligase MARCHF10 (808 aa).

Disordered regions lie at residues 33–81 (LRRQ…LTEP), 101–268 (QTSV…RKAS), and 284–415 (SRRE…EVGV). A compositionally biased stretch (basic and acidic residues) spans 34-49 (RRQEYRRDPNEKKRDQ). A compositionally biased stretch (polar residues) spans 237–249 (QAFQGKNSPQVLS). 2 stretches are compositionally biased toward basic and acidic residues: residues 330–349 (KNFE…RSEP) and 379–397 (LPDR…ENAK). An RING-CH-type zinc finger spans residues 651 to 721 (DSEEEGDLCR…EMCKQGLLVD (71 aa)). Positions 659, 662, 677, 679, 687, 690, 711, and 714 each coordinate Zn(2+). The segment at 773-808 (ERERLSRNYPQPRTEENENSELGDGNEGSISQSQVV) is disordered.

The catalysed reaction is S-ubiquitinyl-[E2 ubiquitin-conjugating enzyme]-L-cysteine + [acceptor protein]-L-lysine = [E2 ubiquitin-conjugating enzyme]-L-cysteine + N(6)-ubiquitinyl-[acceptor protein]-L-lysine.. It functions in the pathway protein modification; protein ubiquitination. Functionally, E3 ubiquitin-protein ligase. E3 ubiquitin ligases accept ubiquitin from an E2 ubiquitin-conjugating enzyme in the form of a thioester and then directly transfer the ubiquitin to targeted substrates. This chain is Probable E3 ubiquitin-protein ligase MARCHF10, found in Homo sapiens (Human).